The following is a 600-amino-acid chain: 1-deoxy-D-xylulose-5-phosphate synthase (600 aa).

Residues His-63 and 104-106 (GHS) contribute to the thiamine diphosphate site. Asp-135 is a binding site for Mg(2+). Thiamine diphosphate contacts are provided by residues 136 to 137 (GA), Asn-164, Tyr-271, and Glu-352. Mg(2+) is bound at residue Asn-164.

This sequence belongs to the transketolase family. DXPS subfamily. Homodimer. It depends on Mg(2+) as a cofactor. Thiamine diphosphate serves as cofactor.

The enzyme catalyses D-glyceraldehyde 3-phosphate + pyruvate + H(+) = 1-deoxy-D-xylulose 5-phosphate + CO2. It participates in metabolic intermediate biosynthesis; 1-deoxy-D-xylulose 5-phosphate biosynthesis; 1-deoxy-D-xylulose 5-phosphate from D-glyceraldehyde 3-phosphate and pyruvate: step 1/1. Functionally, catalyzes the acyloin condensation reaction between C atoms 2 and 3 of pyruvate and glyceraldehyde 3-phosphate to yield 1-deoxy-D-xylulose-5-phosphate (DXP). In Campylobacter fetus subsp. fetus (strain 82-40), this protein is 1-deoxy-D-xylulose-5-phosphate synthase.